Here is a 296-residue protein sequence, read N- to C-terminus: Indole-3-glycerol phosphate synthase (296 aa).

Belongs to the TrpC family.

The enzyme catalyses 1-(2-carboxyphenylamino)-1-deoxy-D-ribulose 5-phosphate + H(+) = (1S,2R)-1-C-(indol-3-yl)glycerol 3-phosphate + CO2 + H2O. The protein operates within amino-acid biosynthesis; L-tryptophan biosynthesis; L-tryptophan from chorismate: step 4/5. This chain is Indole-3-glycerol phosphate synthase, found in Microcystis aeruginosa (strain NIES-843 / IAM M-2473).